Reading from the N-terminus, the 1282-residue chain is Indigoidine synthase (1282 aa).

The segment at 24–379 (AQRVAEHPEA…GGIQLARGYL (356 aa)) is adenylation. The Carrier domain maps to 937-1012 (APRTETEKEI…KLARRLEREV (76 aa)). O-(pantetheine 4'-phosphoryl)serine is present on S972. Residues 1030–1138 (RPVICWPGLG…APGSPKVRAE (109 aa)) are thioesterase.

This sequence belongs to the ATP-dependent AMP-binding enzyme family. Requires pantetheine 4'-phosphate as cofactor.

It catalyses the reaction 2 FMN + 2 L-glutamine + 2 ATP + O2 = indigoidine + 2 FMNH2 + 2 AMP + 2 diphosphate + 2 H2O. The catalysed reaction is FMN + L-glutamine + ATP = 3-amino-1,5-dihydropyridine-2,6-dione + FMNH2 + AMP + diphosphate. The enzyme catalyses 2 3-amino-1,5-dihydropyridine-2,6-dione + O2 = indigoidine + 2 H2O. The protein operates within pigment biosynthesis. Nonribosomal peptide synthetase involved in the biosynthesis of the blue pigment indigoidine. Catalyzes the synthesis of the blue pigment using L-Gln as a substrate. Two glutamine molecules are cyclized and oxidized to form indigoidine. The protein is Indigoidine synthase of Streptomyces lavendulae.